The chain runs to 334 residues: MTQYIFPCIDGHTCGNPVRLVAGGAPRLEGATMLEKRAHFLREFDWIRTGLMFEPRGHDMMSGAILYPPTRGDCDVAVLYIETSGCLPMCGHGTIGTITMGIENGLIVPRTPGRLSIETPAGKVDIEYRQEGRHVEEVRLTNVPGFLYAEGLTAEVEGLGEIVVDVAYGGNFYAIVEPQKNFRDMADHTAGELIGWSLTLRAALNQKYEFTHPEHPQINGLSHIQWTGAPTVPGAHARNAVFYGDKAIDRSPCGTGTSARMAQLAARGRLGVGDEFWHESIIGSIFKGRIEAAATVAGRDAIIPSIAGWARQTGLNTIFIDAERDPFAHGFVVK.

The active-site Proton acceptor is the C90. Substrate-binding positions include 91–92, H223, and D249; that span reads GH. The Proton donor role is filled by C253. Residue 254–255 coordinates substrate; the sequence is GT.

This sequence belongs to the proline racemase family. As to quaternary structure, homodimer.

It catalyses the reaction trans-4-hydroxy-L-proline = cis-4-hydroxy-D-proline. Functionally, catalyzes the epimerization of trans-4-hydroxy-L-proline (t4LHyp) to cis-4-hydroxy-D-proline (c4DHyp). Is likely involved in a degradation pathway that converts t4LHyp to alpha-ketoglutarate, which would allow P.denitrificans to grow on t4LHyp as a sole carbon source. Also seems to be involved in an alternative catabolic pathway that degrades trans-4-hydroxy-L-proline betaine (tHyp-B) to alpha-ketoglutarate; this pathway would permit the utilization of tHyp-B as a sole carbon and nitrogen source. The polypeptide is 4-hydroxyproline 2-epimerase (hypF) (Paracoccus denitrificans (strain Pd 1222)).